The chain runs to 137 residues: Endoribonuclease YbeY (137 aa).

Residues His107, His111, and Asp117 each coordinate Zn(2+).

Belongs to the endoribonuclease YbeY family. Zn(2+) is required as a cofactor.

It localises to the cytoplasm. In terms of biological role, single strand-specific metallo-endoribonuclease involved in late-stage 70S ribosome quality control and in maturation of the 3' terminus of the 16S rRNA. In Bacteroides thetaiotaomicron (strain ATCC 29148 / DSM 2079 / JCM 5827 / CCUG 10774 / NCTC 10582 / VPI-5482 / E50), this protein is Endoribonuclease YbeY.